The sequence spans 284 residues: Tropomyosin (284 aa).

The stretch at 1–284 (MDGIKKKMIA…DQTFAELTGY (284 aa)) forms a coiled coil. The segment at 111-131 (TKLEEASKTAEESERGRKDLE) is disordered.

It belongs to the tropomyosin family. In terms of assembly, homodimer.

Functionally, tropomyosin, in association with the troponin complex, plays a central role in the calcium dependent regulation of muscle contraction. This chain is Tropomyosin, found in Schistosoma haematobium (Blood fluke).